Consider the following 452-residue polypeptide: FAD transporter (452 aa).

12 helical membrane passes run 21-41 (LPNL…TFFI), 49-69 (LAAI…AIGV), 96-116 (ALLL…IFIE), 131-151 (LIHD…LLMV), 167-187 (MIMT…IFGI), 199-219 (AIAT…LLII), 248-270 (AALM…AHID), 283-303 (LESV…PFIA), 324-344 (FILV…QPLA), 357-377 (LSFY…VIIF), 392-412 (VINL…GSYI), and 417-437 (GLLL…YYLA).

This sequence belongs to the multi antimicrobial extrusion (MATE) (TC 2.A.66.1) family.

It localises to the cell inner membrane. Functionally, flavin adenine dinucleotide (FAD) transporter that facilitates export of flavin electron shuttles. The protein is FAD transporter of Shewanella oneidensis (strain ATCC 700550 / JCM 31522 / CIP 106686 / LMG 19005 / NCIMB 14063 / MR-1).